We begin with the raw amino-acid sequence, 396 residues long: Putative carbamoyltransferase YgeW (396 aa).

Residues 71-74 (STRT), Gln98, 165-168 (HPTQ), and 330-331 (CL) contribute to the carbamoyl phosphate site.

The protein belongs to the aspartate/ornithine carbamoyltransferase superfamily. Homotrimer.

The chain is Putative carbamoyltransferase YgeW (ygeW) from Escherichia coli O6:H1 (strain CFT073 / ATCC 700928 / UPEC).